The following is a 174-amino-acid chain: Large ribosomal subunit protein uL10 (174 aa).

The protein belongs to the universal ribosomal protein uL10 family. Part of the ribosomal stalk of the 50S ribosomal subunit. The N-terminus interacts with L11 and the large rRNA to form the base of the stalk. The C-terminus forms an elongated spine to which L12 dimers bind in a sequential fashion forming a multimeric L10(L12)X complex.

Functionally, forms part of the ribosomal stalk, playing a central role in the interaction of the ribosome with GTP-bound translation factors. In Acidiphilium cryptum (strain JF-5), this protein is Large ribosomal subunit protein uL10.